The primary structure comprises 766 residues: Sucrose synthase (766 aa).

A GT-B glycosyltransferase region spans residues 220 to 698 (MVFNVVILSV…GLLRIKERYT (479 aa)).

It belongs to the glycosyltransferase 1 family. Plant sucrose synthase subfamily. Expressed most predominantly in tap root.

The catalysed reaction is an NDP-alpha-D-glucose + D-fructose = a ribonucleoside 5'-diphosphate + sucrose + H(+). Its function is as follows. Sucrose-cleaving enzyme that provides UDP-glucose and fructose for various metabolic pathways. In Beta vulgaris (Sugar beet), this protein is Sucrose synthase (SS1).